We begin with the raw amino-acid sequence, 91 residues long: Acylphosphatase (91 aa).

One can recognise an Acylphosphatase-like domain in the interval 5 to 91 (CLHAYVGGRV…QGIAGFVVRR (87 aa)). Residues R20 and N38 contribute to the active site.

It belongs to the acylphosphatase family.

The catalysed reaction is an acyl phosphate + H2O = a carboxylate + phosphate + H(+). This Pseudomonas aeruginosa (strain ATCC 15692 / DSM 22644 / CIP 104116 / JCM 14847 / LMG 12228 / 1C / PRS 101 / PAO1) protein is Acylphosphatase (acyP).